We begin with the raw amino-acid sequence, 561 residues long: Developmental and secondary metabolism regulator veA (561 aa).

Disordered stretches follow at residues 1–23 (MANRPSLMPPHNETEHSVSRITR), 41–60 (ARACGAGAKSSADRRPVDPP), and 258–361 (AYAR…PQGI). Residues 12 to 23 (NETEHSVSRITR) show a composition bias toward basic and acidic residues. The Velvet domain maps to 25-233 (GKQLTYKLSV…AEQGCRVRIR (209 aa)). Residues 39–44 (ERARAC) carry the Nuclear localization signal motif. Over residues 258 to 268 (AYARSSDRFTT) the composition is skewed to basic and acidic residues. Residues 324–339 (SHSQTPSYQSHLSFGS) show a composition bias toward polar residues. Over residues 347–357 (PHMPPTPPPVA) the composition is skewed to pro residues. The segment at 438–485 (RPQTPNLPAMPPPKPLSNDYANHVVPSVECTSPGGSGGGGYDNVRGKR) is PEST. Positions 491–524 (GPTYGKRSHEDTFGLDDRSMQNGMRPDTEPYPAY) are disordered. The segment covering 497 to 509 (RSHEDTFGLDDRS) has biased composition (basic and acidic residues).

The protein belongs to the velvet family. VeA subfamily. As to quaternary structure, component of the heterotrimeric velvet complex composed of laeA, veA and velB; velA acting as a bridging protein between laeA and velB. Interacts with kapA. Interacts with vosA and velc.

It is found in the nucleus. It localises to the cytoplasm. Functionally, component of the velvet transcription factor complex that controls sexual/asexual developmental ratio in response to light, promoting sexual development in the darkness while stimulating asexual sporulation under illumination. The velvet complex acts as a global regulator for secondary metabolite gene expression. Controls the expression of the penicillin gene cluster. Positively controls the expression of the class V chitinase chiB1. Positively controls the expression of the transcription factor atfA. Required for cell wall integrity and controls hyphal branching. The chain is Developmental and secondary metabolism regulator veA from Penicillium rubens (strain ATCC 28089 / DSM 1075 / NRRL 1951 / Wisconsin 54-1255) (Penicillium chrysogenum).